The following is a 172-amino-acid chain: Shikimate kinase (172 aa).

Position 11-16 (11-16 (GSGKTT)) interacts with ATP. T15 provides a ligand contact to Mg(2+). Substrate is bound by residues D33, R57, and G79. An ATP-binding site is contributed by R117. Substrate is bound at residue R136.

This sequence belongs to the shikimate kinase family. Monomer. Requires Mg(2+) as cofactor.

The protein localises to the cytoplasm. It catalyses the reaction shikimate + ATP = 3-phosphoshikimate + ADP + H(+). The protein operates within metabolic intermediate biosynthesis; chorismate biosynthesis; chorismate from D-erythrose 4-phosphate and phosphoenolpyruvate: step 5/7. In terms of biological role, catalyzes the specific phosphorylation of the 3-hydroxyl group of shikimic acid using ATP as a cosubstrate. This chain is Shikimate kinase, found in Caldicellulosiruptor saccharolyticus (strain ATCC 43494 / DSM 8903 / Tp8T 6331).